Reading from the N-terminus, the 807-residue chain is Putative transmembrane protein ORF807 (807 aa).

Helical transmembrane passes span 210–230 (VLML…SDIL), 234–254 (GLST…IVYF), 270–290 (VTIQ…FVIL), 459–479 (ILIG…LVLT), and 657–677 (VALL…MPLV).

It localises to the host membrane. The chain is Putative transmembrane protein ORF807 from Acidianus filamentous virus 1 (isolate United States/Yellowstone) (AFV-1).